The following is a 568-amino-acid chain: 2-succinyl-5-enolpyruvyl-6-hydroxy-3-cyclohexene-1-carboxylate synthase (568 aa).

Belongs to the TPP enzyme family. MenD subfamily. As to quaternary structure, homodimer. It depends on Mg(2+) as a cofactor. Mn(2+) serves as cofactor. The cofactor is thiamine diphosphate.

The enzyme catalyses isochorismate + 2-oxoglutarate + H(+) = 5-enolpyruvoyl-6-hydroxy-2-succinyl-cyclohex-3-ene-1-carboxylate + CO2. It participates in quinol/quinone metabolism; 1,4-dihydroxy-2-naphthoate biosynthesis; 1,4-dihydroxy-2-naphthoate from chorismate: step 2/7. The protein operates within quinol/quinone metabolism; menaquinone biosynthesis. Catalyzes the thiamine diphosphate-dependent decarboxylation of 2-oxoglutarate and the subsequent addition of the resulting succinic semialdehyde-thiamine pyrophosphate anion to isochorismate to yield 2-succinyl-5-enolpyruvyl-6-hydroxy-3-cyclohexene-1-carboxylate (SEPHCHC). The sequence is that of 2-succinyl-5-enolpyruvyl-6-hydroxy-3-cyclohexene-1-carboxylate synthase from Actinobacillus pleuropneumoniae serotype 3 (strain JL03).